Reading from the N-terminus, the 69-residue chain is Conotoxin reg3f (69 aa).

An N-terminal signal peptide occupies residues 1–20 (MMSKLGVLLTICLLLFPLSA). Residues 21–52 (LPLDGDQPADQPAERMQDISPEQNPLFHPDKR) constitute a propeptide that is removed on maturation. Cystine bridges form between Cys54–Cys68, Cys55–Cys66, and Cys60–Cys69. Cys69 carries the post-translational modification Cysteine amide.

In terms of tissue distribution, expressed by the venom duct.

It localises to the secreted. In Conus regius (Crown cone), this protein is Conotoxin reg3f.